A 314-amino-acid polypeptide reads, in one-letter code: Methionyl-tRNA formyltransferase (314 aa).

113–116 contacts (6S)-5,6,7,8-tetrahydrofolate; that stretch reads SLLP.

This sequence belongs to the Fmt family.

The enzyme catalyses L-methionyl-tRNA(fMet) + (6R)-10-formyltetrahydrofolate = N-formyl-L-methionyl-tRNA(fMet) + (6S)-5,6,7,8-tetrahydrofolate + H(+). Its function is as follows. Attaches a formyl group to the free amino group of methionyl-tRNA(fMet). The formyl group appears to play a dual role in the initiator identity of N-formylmethionyl-tRNA by promoting its recognition by IF2 and preventing the misappropriation of this tRNA by the elongation apparatus. The chain is Methionyl-tRNA formyltransferase from Pseudomonas syringae pv. syringae (strain B728a).